The primary structure comprises 191 residues: Shikimate kinase (191 aa).

24 to 29 contacts ATP; the sequence is GSGKTS. Position 28 (threonine 28) interacts with Mg(2+). Residues aspartate 46, arginine 70, and glycine 92 each contribute to the substrate site. Arginine 130 is a binding site for ATP. Arginine 149 lines the substrate pocket.

This sequence belongs to the shikimate kinase family. As to quaternary structure, monomer. Mg(2+) is required as a cofactor.

It localises to the cytoplasm. The enzyme catalyses shikimate + ATP = 3-phosphoshikimate + ADP + H(+). The protein operates within metabolic intermediate biosynthesis; chorismate biosynthesis; chorismate from D-erythrose 4-phosphate and phosphoenolpyruvate: step 5/7. In terms of biological role, catalyzes the specific phosphorylation of the 3-hydroxyl group of shikimic acid using ATP as a cosubstrate. This Parasynechococcus marenigrum (strain WH8102) protein is Shikimate kinase.